Here is a 757-residue protein sequence, read N- to C-terminus: Endonuclease MutS2 (757 aa).

Residue 321–328 coordinates ATP; the sequence is GPNMGGKT. The Smr domain occupies 681-756; that stretch reads IDIRGMTVEE…GTGVTVVEVK (76 aa).

The protein belongs to the DNA mismatch repair MutS family. MutS2 subfamily. As to quaternary structure, homodimer. Binds to stalled ribosomes, contacting rRNA.

Its function is as follows. Endonuclease that is involved in the suppression of homologous recombination and thus may have a key role in the control of bacterial genetic diversity. In terms of biological role, acts as a ribosome collision sensor, splitting the ribosome into its 2 subunits. Detects stalled/collided 70S ribosomes which it binds and splits by an ATP-hydrolysis driven conformational change. Acts upstream of the ribosome quality control system (RQC), a ribosome-associated complex that mediates the extraction of incompletely synthesized nascent chains from stalled ribosomes and their subsequent degradation. Probably generates substrates for RQC. In Thermotoga petrophila (strain ATCC BAA-488 / DSM 13995 / JCM 10881 / RKU-1), this protein is Endonuclease MutS2.